A 31-amino-acid polypeptide reads, in one-letter code: Cytochrome b6-f complex subunit 6 (31 aa).

A helical transmembrane segment spans residues 4–24; the sequence is IISYFGFLFGALTLALILFIG.

It belongs to the PetL family. In terms of assembly, the 4 large subunits of the cytochrome b6-f complex are cytochrome b6, subunit IV (17 kDa polypeptide, PetD), cytochrome f and the Rieske protein, while the 4 small subunits are PetG, PetL, PetM and PetN. The complex functions as a dimer.

Its subcellular location is the plastid. The protein resides in the chloroplast thylakoid membrane. Component of the cytochrome b6-f complex, which mediates electron transfer between photosystem II (PSII) and photosystem I (PSI), cyclic electron flow around PSI, and state transitions. PetL is important for photoautotrophic growth as well as for electron transfer efficiency and stability of the cytochrome b6-f complex. In Physcomitrium patens (Spreading-leaved earth moss), this protein is Cytochrome b6-f complex subunit 6.